A 405-amino-acid chain; its full sequence is Phosphatidylinositol 5-phosphate 4-kinase type-2 alpha (405 aa).

A2 carries the N-acetylalanine modification. Residue T3 is modified to Phosphothreonine. Phosphoserine is present on S14. The PIPK domain maps to A33 to L405. Residues V59–D65 are required for interaction with PIP5K1A. K89 and K145 each carry N6-acetyllysine. Residues Q288–A328 form a disordered region. Acidic residues predominate over residues E289 to S304.

In terms of assembly, homodimer. Interacts with PIP4K2B; the interaction may regulate localization to the nucleus. Probably interacts with PIP5K1A; the interaction inhibits PIP5K1A kinase activity. Post-translationally, phosphorylated in tyrosines. Phosphorylation is induced by light and increases kinase activity. In terms of tissue distribution, detected in rod photoreceptor cells.

The protein resides in the cell membrane. It localises to the nucleus. It is found in the lysosome. Its subcellular location is the cytoplasm. The protein localises to the photoreceptor inner segment. The protein resides in the cell projection. It localises to the cilium. It is found in the photoreceptor outer segment. The enzyme catalyses a 1,2-diacyl-sn-glycero-3-phospho-(1D-myo-inositol-5-phosphate) + ATP = a 1,2-diacyl-sn-glycero-3-phospho-(1D-myo-inositol-4,5-bisphosphate) + ADP + H(+). It carries out the reaction 1,2-dihexadecanoyl-sn-glycero-3-phospho-(1D-myo-inositol-5-phosphate) + ATP = 1,2-dihexadecanoyl-sn-glycero-3-phospho-(1D-myo-inositol-4,5-bisphosphate) + ADP + H(+). The catalysed reaction is 1,2-dihexadecanoyl-sn-glycero-3-phospho-(1D-myo-inositol-5-phosphate) + GTP = 1,2-dihexadecanoyl-sn-glycero-3-phospho-(1D-myo-inositol-4,5-bisphosphate) + GDP + H(+). Its activity is regulated as follows. In rod outer segments, activated by light. Catalyzes the phosphorylation of phosphatidylinositol 5-phosphate (PtdIns5P) on the fourth hydroxyl of the myo-inositol ring, to form phosphatidylinositol 4,5-bisphosphate (PtdIns(4,5)P2). Has both ATP- and GTP-dependent kinase activities. May exert its function by regulating the levels of PtdIns5P, which functions in the cytosol by increasing AKT activity and in the nucleus signals through ING2. May regulate the pool of cytosolic PtdIns5P in response to the activation of tyrosine phosphorylation. Required for lysosome-peroxisome membrane contacts and intracellular cholesterol transport through modulating peroxisomal PtdIns(4,5)P2 level. In collaboration with PIP4K2B, has a role in mediating autophagy in times of nutrient stress. Required for autophagosome-lysosome fusion and the regulation of cellular lipid metabolism. Negatively regulates insulin signaling through a catalytic-independent mechanism. PIP4Ks interact with PIP5Ks and suppress PIP5K-mediated PtdIns(4,5)P2 synthesis and insulin-dependent conversion to PtdIns(3,4,5)P3. May be involved in thrombopoiesis, and the terminal maturation of megakaryocytes and regulation of their size. The protein is Phosphatidylinositol 5-phosphate 4-kinase type-2 alpha of Mus musculus (Mouse).